The chain runs to 121 residues: Large ribosomal subunit protein uL18 (121 aa).

Belongs to the universal ribosomal protein uL18 family. In terms of assembly, part of the 50S ribosomal subunit; part of the 5S rRNA/L5/L18/L25 subcomplex. Contacts the 5S and 23S rRNAs.

In terms of biological role, this is one of the proteins that bind and probably mediate the attachment of the 5S RNA into the large ribosomal subunit, where it forms part of the central protuberance. The sequence is that of Large ribosomal subunit protein uL18 from Pelobacter propionicus (strain DSM 2379 / NBRC 103807 / OttBd1).